Reading from the N-terminus, the 89-residue chain is ATP synthase subunit c, sodium ion specific (89 aa).

Transmembrane regions (helical) follow at residues 9 to 29 (VVLA…IGPG) and 68 to 88 (GIYS…VGLL).

It belongs to the ATPase C chain family. In terms of assembly, F-type ATPases have 2 components, F(1) - the catalytic core - and F(0) - the membrane sodium channel. F(1) has five subunits: alpha(3), beta(3), gamma(1), delta(1), epsilon(1). F(0) has three main subunits: a(1), b(2) and c(10-14). The alpha and beta chains form an alternating ring which encloses part of the gamma chain. F(1) is attached to F(0) by a central stalk formed by the gamma and epsilon chains, while a peripheral stalk is formed by the delta and b chains.

It localises to the cell membrane. F(1)F(0) ATP synthase produces ATP from ADP in the presence of a proton or sodium gradient. F-type ATPases consist of two structural domains, F(1) containing the extramembraneous catalytic core and F(0) containing the membrane sodium channel, linked together by a central stalk and a peripheral stalk. During catalysis, ATP synthesis in the catalytic domain of F(1) is coupled via a rotary mechanism of the central stalk subunits to sodium translocation. In terms of biological role, key component of the F(0) channel; it plays a direct role in translocation across the membrane. A homomeric c-ring of between 10-14 subunits forms the central stalk rotor element with the F(1) delta and epsilon subunits. This is ATP synthase subunit c, sodium ion specific (atpE) from Propionigenium modestum.